Reading from the N-terminus, the 232-residue chain is UPF0235 protein At5g63440 (232 aa).

Belongs to the UPF0235 family. In terms of assembly, interacts with CTN.

It localises to the nucleus speckle. In terms of biological role, may play a role during early embryonic development. Probably involved in pre-mRNA splicing. This Arabidopsis thaliana (Mouse-ear cress) protein is UPF0235 protein At5g63440.